The sequence spans 219 residues: Asperlin biosynthesis cluster protein I (219 aa).

The tract at residues 97–124 (TGSSDNSPTATGIGAAGLTGDRPSSSGA) is disordered. A compositionally biased stretch (low complexity) spans 105 to 116 (TATGIGAAGLTG).

It participates in polyketide biosynthesis. Part of the gene cluster that mediates the biosynthesis of asperlin, a polyketide showing anti-inflammatory, antitumor and antibiotic activities. The first step of the asperlin biosynthesis is the production of the intermediate 2,4,6-octatrienoic acid by the highly redusing polyketide synthase alnA with cleavage of the PKS product by the esterase alnB. 2,4,6-octatrienoic acid is further converted to asperlin via several steps involving the remaining enzymes from the cluster. The polypeptide is Asperlin biosynthesis cluster protein I (Emericella nidulans (strain FGSC A4 / ATCC 38163 / CBS 112.46 / NRRL 194 / M139) (Aspergillus nidulans)).